An 840-amino-acid chain; its full sequence is V-type proton ATPase subunit a, vacuolar isoform (840 aa).

A2 carries the N-acetylalanine modification. Topologically, residues 2-404 (AEKEEAIFRS…DCYGIAQYRE (403 aa)) are cytoplasmic. The stretch at 117 to 145 (LEERLIQMEDATDQIEVQKNDLEQYRFIL) forms a coiled coil. Residues 405 to 423 (INAGLPTIVTFPFMFAIMF) traverse the membrane as a helical segment. Topologically, residues 424-425 (GD) are vacuolar. Residues 426-442 (MGHGFLMTLAALSLVLN) form a helical membrane-spanning segment. The Cytoplasmic segment spans residues 443-456 (EKKINKMKRGEIFD). Residues 457 to 486 (MAFTGRYIILLMGVFSMYTGFLYNDIFSKT) form a helical membrane-spanning segment. At 487-534 (MTIFKSGWKWPDHWKKGESITATSVGTYPIGLDWAWHGTENALLFSNS) the chain is on the vacuolar side. Residues 535–554 (YKMKLSILMGFIHMTYSYFF) traverse the membrane as a helical segment. Residues 555-572 (SLANHLYFNSMIDIIGNF) are Cytoplasmic-facing. A helical transmembrane segment spans residues 573–593 (IPGLLFMQGIFGYLSVCIVYK). At 594 to 636 (WAVDWVKDGKPAPGLLNMLINMFLSPGTIDDELYPHQAKVQVF) the chain is on the vacuolar side. A helical transmembrane segment spans residues 637–656 (LLLMALVCIPWLLLVKPLHF). Topologically, residues 657–719 (KFTHKKKSHE…DIMIHQVIHT (63 aa)) are cytoplasmic. A helical transmembrane segment spans residues 720–744 (IEFCLNCVSHTASYLRLWALSLAHA). Residues 745 to 765 (QLSSVLWTMTIQIAFGFRGFV) are Vacuolar-facing. Residues 766–804 (GVFMTVALFAMWFALTCAVLVLMEGTSAMLHSLRLHWVE) form a helical membrane-spanning segment. Over 805-840 (SMSKFFVGEGLPYEPFAFEYKDMEVAVASASSSASS) the chain is Cytoplasmic.

This sequence belongs to the V-ATPase 116 kDa subunit family. In terms of assembly, V-ATPase is a heteromultimeric enzyme composed of a peripheral catalytic V1 complex (components A to H) attached to an integral membrane V0 proton pore complex (components: a, c, c', c'', d, e, f and VOA1). Post-translationally, glycosylated.

The protein resides in the vacuole membrane. Subunit of the V0 complex of vacuolar(H+)-ATPase (V-ATPase), a multisubunit enzyme composed of a peripheral complex (V1) that hydrolyzes ATP and a membrane integral complex (V0) that translocates protons. V-ATPase is responsible for acidifying and maintaining the pH of intracellular compartments. Is present only in vacuolar V-ATPase complexes; enzymes containing this subunit have a 4-fold higher ratio of proton transport to ATP hydrolysis than complexes containing the Golgi/endosomal isoform and undergo reversible dissociation of V1 and V0 in response to glucose depletion. The protein is V-type proton ATPase subunit a, vacuolar isoform of Saccharomyces cerevisiae (strain ATCC 204508 / S288c) (Baker's yeast).